Consider the following 901-residue polypeptide: HTH-type transcriptional regulator MalT (901 aa).

39-46 (SPAGYGKT) serves as a coordination point for ATP. Residues 829–894 (ELIRTSPLTQ…DAVQHAQQLL (66 aa)) form the HTH luxR-type domain. A DNA-binding region (H-T-H motif) is located at residues 853–872 (NEQIAGELAVAATTIKTHIR).

The protein belongs to the MalT family. As to quaternary structure, monomer in solution. Oligomerizes to an active state in the presence of the positive effectors ATP and maltotriose.

Activated by ATP and maltotriose, which are both required for DNA binding. Functionally, positively regulates the transcription of the maltose regulon whose gene products are responsible for uptake and catabolism of malto-oligosaccharides. Specifically binds to the promoter region of its target genes, recognizing a short DNA motif called the MalT box. The chain is HTH-type transcriptional regulator MalT from Salmonella heidelberg (strain SL476).